The primary structure comprises 624 residues: DNA (cytosine-5)-methyltransferase DRM1 (624 aa).

UBA domains follow at residues 57–100 and 108–149; these read RISD…LFNY and SSKS…LLTY. Residues 160-189 form a disordered region; that stretch reads DMNININDDDDDNLYSLSSDDEEDELNNSS. Acidic residues predominate over residues 166-185; the sequence is NDDDDDNLYSLSSDDEEDEL. A UBA 3 domain is found at 188 to 231; that stretch reads SSNEDRILQALIKMGYLREDAAIAIERCGEDASMEEVVDFICAA. Positions 291 to 622 constitute an SAM-dependent MTase DRM-type domain; the sequence is MHRPVPIPDI…EAVRRKARHM (332 aa).

This sequence belongs to the class I-like SAM-binding methyltransferase superfamily. DRM-methyltransferase family.

It is found in the nucleus. The catalysed reaction is a 2'-deoxycytidine in DNA + S-adenosyl-L-methionine = a 5-methyl-2'-deoxycytidine in DNA + S-adenosyl-L-homocysteine + H(+). In terms of biological role, involved in de novo DNA methylation. Controls asymmetric and CpNpG methylation. Required for FWA gene silencing but not for the maintenance of SUP gene silencing. Functionally redundant to CMT3 to maintain non-CpG methylation. Involved in RNA-directed DNA methylation. The protein is DNA (cytosine-5)-methyltransferase DRM1 (DRM1) of Arabidopsis thaliana (Mouse-ear cress).